The following is a 263-amino-acid chain: 3-methyl-2-oxobutanoate hydroxymethyltransferase (263 aa).

Mg(2+) is bound by residues aspartate 45 and aspartate 84. Residues 45 to 46, aspartate 84, and lysine 112 each bind 3-methyl-2-oxobutanoate; that span reads DS. Glutamate 114 lines the Mg(2+) pocket. Glutamate 181 acts as the Proton acceptor in catalysis.

The protein belongs to the PanB family. As to quaternary structure, homodecamer; pentamer of dimers. Requires Mg(2+) as cofactor.

It is found in the cytoplasm. The enzyme catalyses 3-methyl-2-oxobutanoate + (6R)-5,10-methylene-5,6,7,8-tetrahydrofolate + H2O = 2-dehydropantoate + (6S)-5,6,7,8-tetrahydrofolate. It functions in the pathway cofactor biosynthesis; (R)-pantothenate biosynthesis; (R)-pantoate from 3-methyl-2-oxobutanoate: step 1/2. Functionally, catalyzes the reversible reaction in which hydroxymethyl group from 5,10-methylenetetrahydrofolate is transferred onto alpha-ketoisovalerate to form ketopantoate. The sequence is that of 3-methyl-2-oxobutanoate hydroxymethyltransferase from Buchnera aphidicola subsp. Schizaphis graminum (strain Sg).